We begin with the raw amino-acid sequence, 382 residues long: Protein MSN1 (382 aa).

The segment at 12–26 (LNENEAILTNRVAEL) is leucine-zipper. Polar residues-rich tracts occupy residues 104 to 114 (TLDPQGFTDGT) and 122 to 138 (NYTS…HPQN). Disordered regions lie at residues 104-138 (TLDP…HPQN) and 155-260 (NSQE…EEEQ). Over residues 162–180 (SQQQTNSSNSISQENNSTN) the composition is skewed to low complexity. Polar residues-rich tracts occupy residues 181–198 (PSVD…SNLV) and 207–221 (NPPN…GLYI). Low complexity predominate over residues 222–231 (SSNSSQSRQS). Residues 232 to 253 (PNLQKVSPNHENAVESNAQESV) show a composition bias toward polar residues. A Nuclear localization signal motif is present at residues 266 to 271 (GLKRKR).

The protein resides in the nucleus. Functionally, may function as a transcriptional activator. Increased dosage of MSN1 restores invertase expression in yeast mutants defective in the SNF1 protein kinase, and msn1 disruption reduced derepression of invertase in the wild-type. May affect SUC2 expression. Expression of MSN1 enhances growth in iron-limiting conditions. This Saccharomyces cerevisiae (strain ATCC 204508 / S288c) (Baker's yeast) protein is Protein MSN1 (MSN1).